The primary structure comprises 385 residues: tRNA-specific 2-thiouridylase MnmA (385 aa).

ATP contacts are provided by residues 12-19 and Met38; that span reads GLSGGVDS. An interaction with target base in tRNA region spans residues 108–110; that stretch reads NPD. The Nucleophile role is filled by Cys113. A disulfide bond links Cys113 and Cys210. Position 138 (Gly138) interacts with ATP. Positions 160-162 are interaction with tRNA; it reads KDQ. The active-site Cysteine persulfide intermediate is the Cys210.

Belongs to the MnmA/TRMU family.

It is found in the cytoplasm. The catalysed reaction is S-sulfanyl-L-cysteinyl-[protein] + uridine(34) in tRNA + AH2 + ATP = 2-thiouridine(34) in tRNA + L-cysteinyl-[protein] + A + AMP + diphosphate + H(+). Its function is as follows. Catalyzes the 2-thiolation of uridine at the wobble position (U34) of tRNA, leading to the formation of s(2)U34. The polypeptide is tRNA-specific 2-thiouridylase MnmA (Ureaplasma parvum serovar 3 (strain ATCC 27815 / 27 / NCTC 11736)).